A 131-amino-acid chain; its full sequence is Putative gene 51 protein (131 aa).

This is Putative gene 51 protein (51) from Bacillus phage SP01 (Bacteriophage SP01).